We begin with the raw amino-acid sequence, 211 residues long: Protein YCF54, chloroplastic (211 aa).

The N-terminal 80 residues, 1-80, are a transit peptide targeting the chloroplast; it reads MWSVTGALTV…GESTKYHFLV (80 aa).

The protein belongs to the ycf54 family. In terms of assembly, interacts with LFNR1 and CRD1/CHL27 in chloroplasts.

Its subcellular location is the plastid. The protein localises to the chloroplast. In terms of biological role, involved in the biosynthesis of chlorophyll; acts probably as a scaffolding factor in the MgProto monomethylester (MgProtoME) cyclase complex to stabilize CRD1/CHL27, the catalytic subunit which catalyzes the formation of a fifth isocyclic ring to tetrapyrroles to form protochlorophyllide. This chain is Protein YCF54, chloroplastic, found in Arabidopsis thaliana (Mouse-ear cress).